The following is a 52-amino-acid chain: MASKNREIIKLKSSESSDMYWTVKNKRKTTGRLELKKYDRKLRRHVIFKEAR.

Belongs to the bacterial ribosomal protein bL33 family.

This is Large ribosomal subunit protein bL33 (rpmG) from Chlamydia pneumoniae (Chlamydophila pneumoniae).